Here is a 367-residue protein sequence, read N- to C-terminus: Peptide chain release factor 2 (367 aa).

The residue at position 254 (Q254) is an N5-methylglutamine.

This sequence belongs to the prokaryotic/mitochondrial release factor family. Methylated by PrmC. Methylation increases the termination efficiency of RF2.

The protein resides in the cytoplasm. Peptide chain release factor 2 directs the termination of translation in response to the peptide chain termination codons UGA and UAA. This Variovorax paradoxus (strain S110) protein is Peptide chain release factor 2.